Reading from the N-terminus, the 428-residue chain is Serine--tRNA ligase (428 aa).

231–233 (TAE) contacts L-serine. 262 to 264 (RSE) contributes to the ATP binding site. Glu-285 contributes to the L-serine binding site. 349 to 352 (EISS) serves as a coordination point for ATP. Ser-385 lines the L-serine pocket.

Belongs to the class-II aminoacyl-tRNA synthetase family. Type-1 seryl-tRNA synthetase subfamily. In terms of assembly, homodimer. The tRNA molecule binds across the dimer.

The protein resides in the cytoplasm. It catalyses the reaction tRNA(Ser) + L-serine + ATP = L-seryl-tRNA(Ser) + AMP + diphosphate + H(+). It carries out the reaction tRNA(Sec) + L-serine + ATP = L-seryl-tRNA(Sec) + AMP + diphosphate + H(+). It functions in the pathway aminoacyl-tRNA biosynthesis; selenocysteinyl-tRNA(Sec) biosynthesis; L-seryl-tRNA(Sec) from L-serine and tRNA(Sec): step 1/1. Functionally, catalyzes the attachment of serine to tRNA(Ser). Is also able to aminoacylate tRNA(Sec) with serine, to form the misacylated tRNA L-seryl-tRNA(Sec), which will be further converted into selenocysteinyl-tRNA(Sec). This Staphylococcus aureus (strain MRSA252) protein is Serine--tRNA ligase.